A 295-amino-acid chain; its full sequence is GTPase Era (295 aa).

The Era-type G domain occupies 7-176; that stretch reads KTVSVCIIGR…ITSKAKIAPW (170 aa). The G1 stretch occupies residues 15 to 22; the sequence is GRPNSGKS. 15 to 22 lines the GTP pocket; sequence GRPNSGKS. The tract at residues 41–45 is G2; sequence QTTRS. The tract at residues 62 to 65 is G3; that stretch reads DTPG. Residues 62–66 and 124–127 contribute to the GTP site; these read DTPGI and NKID. Residues 124–127 form a G4 region; sequence NKID. The G5 stretch occupies residues 152 to 154; sequence ISA. The KH type-2 domain occupies 204-281; that stretch reads LQQELPYKLT…HLFLFVKVQE (78 aa).

The protein belongs to the TRAFAC class TrmE-Era-EngA-EngB-Septin-like GTPase superfamily. Era GTPase family. Monomer.

The protein localises to the cytoplasm. It is found in the cell inner membrane. An essential GTPase that binds both GDP and GTP, with rapid nucleotide exchange. Plays a role in 16S rRNA processing and 30S ribosomal subunit biogenesis and possibly also in cell cycle regulation and energy metabolism. This chain is GTPase Era, found in Rickettsia bellii (strain RML369-C).